We begin with the raw amino-acid sequence, 515 residues long: Envelope glycoprotein (515 aa).

Positions 1 to 33 (MPKERRSRRRPQPIIRWVSLTLTLLALCRPIQT) are cleaved as a signal peptide. Residues 34–435 (WRCSLSLGNQ…LGLTAWVRET (402 aa)) lie on the Extracellular side of the membrane. N-linked (GlcNAc...) asparagine; by host glycans are attached at residues Asn129 and Asn203. Positions 212–215 (CAIC) match the CXXC motif. Disulfide bonds link Cys212–Cys215, Cys212–Cys392, and Cys384–Cys391. Residues Asn230, Asn251, Asn256, Asn271, and Asn287 are each glycosylated (N-linked (GlcNAc...) asparagine; by host). Residues 304-324 (VAALTLGLALSVGLTGINVAV) form a fusion peptide region. Coiled-coil stretches lie at residues 330–376 (QRLT…WLYI) and 388–420 (NEPCCFLRIQNDSIILRGDLQPLSQRVSTDWQW). Asn351 carries N-linked (GlcNAc...) asparagine; by host glycosylation. The interval 365 to 381 (AQNRRGLDWLYIRLGFQ) is immunosuppression. A CX6CC motif is present at residues 384–392 (CPTINEPCC). N-linked (GlcNAc...) asparagine; by host glycosylation is present at Asn398. A helical transmembrane segment spans residues 436 to 456 (IHSVLSLFLLALFLLFLAPCL). Residue Cys455 is the site of S-palmitoyl cysteine; by host attachment. The Cytoplasmic portion of the chain corresponds to 457–515 (IKCLTSRLLKLLRQAPHFPEISLTPKPDSDYQALLPSAPEIYSHLSPVKPDYINLRPCP).

The mature envelope protein (Env) consists of a trimer of SU-TM heterodimers attached by a labile interchain disulfide bond. Specific enzymatic cleavages in vivo yield mature proteins. Envelope glycoproteins are synthesized as an inactive precursor that is N-glycosylated and processed likely by host cell furin or by a furin-like protease in the Golgi to yield the mature SU and TM proteins. The cleavage site between SU and TM requires the minimal sequence [KR]-X-[KR]-R. In terms of processing, the CXXC motif is highly conserved across a broad range of retroviral envelope proteins. It is thought to participate in the formation of a labile disulfide bond possibly with the CX6CC motif present in the transmembrane protein. Isomerization of the intersubunit disulfide bond to an SU intrachain disulfide bond is thought to occur upon receptor recognition in order to allow membrane fusion. Post-translationally, the transmembrane protein is palmitoylated.

The protein localises to the virion membrane. It is found in the host cell membrane. Its function is as follows. The surface protein (SU) attaches the virus to the host cell by binding to its receptor. This interaction triggers the refolding of the transmembrane protein (TM) and is thought to activate its fusogenic potential by unmasking its fusion peptide. Fusion occurs at the host cell plasma membrane. In terms of biological role, the transmembrane protein (TM) acts as a class I viral fusion protein. Under the current model, the protein has at least 3 conformational states: pre-fusion native state, pre-hairpin intermediate state, and post-fusion hairpin state. During viral and target cell membrane fusion, the coiled coil regions (heptad repeats) assume a trimer-of-hairpins structure, positioning the fusion peptide in close proximity to the C-terminal region of the ectodomain. The formation of this structure appears to drive apposition and subsequent fusion of viral and target cell membranes. Membranes fusion leads to delivery of the nucleocapsid into the cytoplasm. This Bos taurus (Bovine) protein is Envelope glycoprotein (env).